Consider the following 258-residue polypeptide: 5'-nucleotidase SurE (258 aa).

Positions 9, 10, 42, and 95 each coordinate a divalent metal cation.

It belongs to the SurE nucleotidase family. Requires a divalent metal cation as cofactor.

The protein localises to the cytoplasm. The enzyme catalyses a ribonucleoside 5'-phosphate + H2O = a ribonucleoside + phosphate. Nucleotidase that shows phosphatase activity on nucleoside 5'-monophosphates. In Campylobacter concisus (strain 13826), this protein is 5'-nucleotidase SurE.